The primary structure comprises 244 residues: Large ribosomal subunit protein uL30A (244 aa).

A disordered region spans residues 1–26; sequence MAAEKILTPESQLKKSKAQQKTAEQV.

Belongs to the universal ribosomal protein uL30 family. Component of the large ribosomal subunit (LSU). Mature yeast ribosomes consist of a small (40S) and a large (60S) subunit. The 40S small subunit contains 1 molecule of ribosomal RNA (18S rRNA) and 33 different proteins (encoded by 57 genes). The large 60S subunit contains 3 rRNA molecules (25S, 5.8S and 5S rRNA) and 46 different proteins (encoded by 81 genes).

It localises to the cytoplasm. In terms of biological role, component of the ribosome, a large ribonucleoprotein complex responsible for the synthesis of proteins in the cell. The small ribosomal subunit (SSU) binds messenger RNAs (mRNAs) and translates the encoded message by selecting cognate aminoacyl-transfer RNA (tRNA) molecules. The large subunit (LSU) contains the ribosomal catalytic site termed the peptidyl transferase center (PTC), which catalyzes the formation of peptide bonds, thereby polymerizing the amino acids delivered by tRNAs into a polypeptide chain. The nascent polypeptides leave the ribosome through a tunnel in the LSU and interact with protein factors that function in enzymatic processing, targeting, and the membrane insertion of nascent chains at the exit of the ribosomal tunnel. The sequence is that of Large ribosomal subunit protein uL30A from Saccharomyces cerevisiae (strain ATCC 204508 / S288c) (Baker's yeast).